The following is a 760-amino-acid chain: Histone-lysine N-methyltransferase EZH2 (760 aa).

2 disordered regions span residues 208–231 (KDDA…SKKF) and 356–444 (PERA…PENV). Positions 361-373 (TPSKRSTGRRRGR) are enriched in basic residues. Polar residues predominate over residues 375 to 388 (PNSNSRPSTPTVNS). Residues 389-400 (ETKDTDSDREGG) are compositionally biased toward basic and acidic residues. The region spanning 517-619 (CRKIQLKKDG…SKNVSCKNCS (103 aa)) is the CXC domain. Positions 626–741 (KHLLLAPSDV…TGEELFFDYR (116 aa)) constitute an SET domain.

This sequence belongs to the class V-like SAM-binding methyltransferase superfamily. Histone-lysine methyltransferase family. EZ subfamily. Component of the prc2/eed-ezh2 complex.

The protein resides in the nucleus. The catalysed reaction is L-lysyl(27)-[histone H3] + 3 S-adenosyl-L-methionine = N(6),N(6),N(6)-trimethyl-L-lysyl(27)-[histone H3] + 3 S-adenosyl-L-homocysteine + 3 H(+). Functionally, polycomb group (PcG) protein. Catalytic subunit of the prc2/eed-ezh2 complex, which methylates 'Lys-9' and 'Lys-27' of histone H3, leading to transcriptional repression of the affected target gene. May regulate the circadian clock via histone methylation at the promoter of the circadian genes. This chain is Histone-lysine N-methyltransferase EZH2 (ezh2), found in Danio rerio (Zebrafish).